A 202-amino-acid polypeptide reads, in one-letter code: MVIQRKYRASRRLGVSLWGRSKDPFNTRNYPPGQHGNMGYKKPSDFGKQFGAHKKFKFYYAISSKQMRNMFLKAYKKKGDTGDNFVGLLESMLSSVLYNSGLVPTIFSARQLISHKHVLVNGKVVNISSYSVKPGDTIKLREKAVNLPPVLAAIDAQEQKVPDYLEVDVKERSVKYLRVPKYYEVPYPANMEVNLVIEFYSR.

The S4 RNA-binding domain maps to serine 91–aspartate 168.

Belongs to the universal ribosomal protein uS4 family. Part of the 30S ribosomal subunit. Contacts protein S5. The interaction surface between S4 and S5 is involved in control of translational fidelity.

Functionally, one of the primary rRNA binding proteins, it binds directly to 16S rRNA where it nucleates assembly of the body of the 30S subunit. Its function is as follows. With S5 and S12 plays an important role in translational accuracy. The protein is Small ribosomal subunit protein uS4 of Ehrlichia ruminantium (strain Welgevonden).